The chain runs to 71 residues: Small, acid-soluble spore protein I (71 aa).

This sequence belongs to the SspI family.

The protein resides in the spore core. The chain is Small, acid-soluble spore protein I from Bacillus velezensis (strain DSM 23117 / BGSC 10A6 / LMG 26770 / FZB42) (Bacillus amyloliquefaciens subsp. plantarum).